A 126-amino-acid chain; its full sequence is Protein ApaG (126 aa).

Residues 2 to 126 form the ApaG domain; it reads SDTQHQVNVR…FRLAVPGALH (125 aa).

The protein is Protein ApaG of Pseudomonas aeruginosa (strain LESB58).